Reading from the N-terminus, the 293-residue chain is Probable porphobilinogen deaminase (293 aa).

Cys233 is modified (S-(dipyrrolylmethanemethyl)cysteine).

It belongs to the HMBS family. Dipyrromethane serves as cofactor.

The catalysed reaction is 4 porphobilinogen + H2O = hydroxymethylbilane + 4 NH4(+). It participates in porphyrin-containing compound metabolism; protoporphyrin-IX biosynthesis; coproporphyrinogen-III from 5-aminolevulinate: step 2/4. Tetrapolymerization of the monopyrrole PBG into the hydroxymethylbilane pre-uroporphyrinogen in several discrete steps. This chain is Probable porphobilinogen deaminase, found in Saccharolobus islandicus (strain M.16.27) (Sulfolobus islandicus).